A 616-amino-acid polypeptide reads, in one-letter code: Chaperone protein DnaK (616 aa).

A Phosphothreonine; by autocatalysis modification is found at T174. Residues 575–616 (QQTQGAQSDPGAAGFGGQQEAPGAGQDENVVDADYKVVDDDK) are disordered. The span at 607–616 (ADYKVVDDDK) shows a compositional bias: basic and acidic residues.

Belongs to the heat shock protein 70 family.

Functionally, acts as a chaperone. The chain is Chaperone protein DnaK from Ruminiclostridium cellulolyticum (strain ATCC 35319 / DSM 5812 / JCM 6584 / H10) (Clostridium cellulolyticum).